We begin with the raw amino-acid sequence, 280 residues long: MEPEDTQLKEDIKTTVNYIKQHGVEFENKLLEDERFSFIKKDDPLHEYYTKLMNEPTDTVSGEDNDRKSEREIARPPDFLFSQYDTGISRRDMEVIKLTARYYAKDKSIVEQMISKDGEARLNFMNSSHPLHKTFTDFVAQYKRVYSFTGQEIKKSKRTILDNCFERTQYWEFEKDKDREHDKLVELCKIQFAAIPWDKFTQVAKFSIPEDTEIFEGSLDLEQMRLRRVQTGIKLFDSIKPTNEEEKIVSDQGKQKGGDSKGKKRKIRAVGETRLKKSKK.

An SURP motif 1 repeat occupies 11-49 (DIKTTVNYIKQHGVEFENKLLEDERFSFIKKDDPLHEYY). The interval 53-72 (MNEPTDTVSGEDNDRKSERE) is disordered. The stretch at 95 to 135 (VIKLTARYYAKDKSIVEQMISKDGEARLNFMNSSHPLHKTF) is one SURP motif 2 repeat. Basic and acidic residues-rich tracts occupy residues 246-261 (EKIVSDQGKQKGGDSK) and 269-280 (AVGETRLKKSKK). A disordered region spans residues 246 to 280 (EKIVSDQGKQKGGDSKGKKRKIRAVGETRLKKSKK).

In terms of assembly, belongs to the CWC complex (or CEF1-associated complex), a spliceosome sub-complex reminiscent of a late-stage spliceosome composed of the U2, U5 and U6 snRNAs and at least BUD13, BUD31, BRR2, CDC40, CEF1, CLF1, CUS1, CWC2, CWC15, CWC21, CWC22, CWC23, CWC24, CWC25, CWC27, ECM2, HSH155, IST3, ISY1, LEA1, MSL1, NTC20, PRP8, PRP9, PRP11, PRP19, PRP21, PRP22, PRP45, PRP46, SLU7, SMB1, SMD1, SMD2, SMD3, SMX2, SMX3, SNT309, SNU114, SPP2, SYF1, SYF2, RSE1 and YJU2.

Its subcellular location is the nucleus. Its function is as follows. mRNA splicing factors, PRP9, PRP11, and PRP21, are necessary for binding of the U2 snRNP to the pre-mRNA in an early step of spliceosome assembly. The chain is Pre-mRNA-splicing factor PRP21 (PRP21) from Saccharomyces cerevisiae (strain ATCC 204508 / S288c) (Baker's yeast).